A 612-amino-acid polypeptide reads, in one-letter code: Peroxisomal carnitine O-octanoyltransferase (612 aa).

Position 1 is an N-acetylmethionine (M1). Residues K40 and K57 each carry the N6-succinyllysine modification. The Proton acceptor role is filled by H327. Residues K406 and 410-417 (KEEALHPD) each bind CoA. Position 406 is an N6-acetyllysine; alternate (K406). K406 bears the N6-succinyllysine; alternate mark. (R)-carnitine-binding residues include Y439, T441, and T452. Residues 610 to 612 (AHL) carry the Microbody targeting signal motif.

Belongs to the carnitine/choline acetyltransferase family.

The protein localises to the peroxisome. It catalyses the reaction octanoyl-CoA + (R)-carnitine = O-octanoyl-(R)-carnitine + CoA. The enzyme catalyses 4,8-dimethylnonanoyl-CoA + (R)-carnitine = O-4,8-dimethylnonanoyl-(R)-carnitine + CoA. Its pathway is lipid metabolism; fatty acid beta-oxidation. In terms of biological role, beta-oxidation of fatty acids. The highest activity concerns the C6 to C10 chain length substrate. This Mus musculus (Mouse) protein is Peroxisomal carnitine O-octanoyltransferase (Crot).